A 603-amino-acid chain; its full sequence is Pentatricopeptide repeat-containing protein At2g02980, chloroplastic (603 aa).

The transit peptide at 1–38 (MAISSASLISSFSHAETFTKHSKIDTVNTQNPILLISK) directs the protein to the chloroplast. PPR repeat units follow at residues 93 to 127 (DIVI…GILP), 128 to 162 (DNYT…GLDD), 163 to 193 (NVYV…IVEP), 194 to 228 (CVVC…YLKP), 229 to 263 (NEIT…SFCK), 264 to 294 (YVKV…MRYK), 295 to 329 (DTQA…NVQP), 330 to 365 (DEIT…GIVP), 366 to 400 (SIKH…PTPM), and 432 to 466 (HGGD…KAVK). The type E motif stretch occupies residues 401–476 (LWRILLAACS…VPGCSSIEVN (76 aa)). Residues 477–507 (NVVHEFFSGDGVKSATTKLHRALDEMVKELK) are type E(+) motif. Positions 508–603 (LSGYVPDTSM…DGKCSCGDFW (96 aa)) are type DYW motif.

The protein belongs to the PPR family. PCMP-H subfamily.

The protein localises to the plastid. The protein resides in the chloroplast. Involved in RNA editing event in chloroplasts. Required for the editing of a single site in ndhD transcript, which is a plastid-encoded subunits of the chloroplast NAD(P)H dehydrogenase (NDH) complex. Not essential for the activity of the NDH complex of the photosynthetic electron transport chain. The sequence is that of Pentatricopeptide repeat-containing protein At2g02980, chloroplastic (PCMP-H26) from Arabidopsis thaliana (Mouse-ear cress).